An 885-amino-acid polypeptide reads, in one-letter code: Leucine--tRNA ligase (885 aa).

The 'HIGH' region signature appears at 48–58 (PYPSGKLHMGH). A 'KMSKS' region motif is present at residues 639–643 (TMSKS). K642 serves as a coordination point for ATP.

It belongs to the class-I aminoacyl-tRNA synthetase family.

It localises to the cytoplasm. The catalysed reaction is tRNA(Leu) + L-leucine + ATP = L-leucyl-tRNA(Leu) + AMP + diphosphate. This is Leucine--tRNA ligase from Bordetella petrii (strain ATCC BAA-461 / DSM 12804 / CCUG 43448).